A 305-amino-acid polypeptide reads, in one-letter code: PI protein (305 aa).

The protein belongs to the initiator RepB protein family. In terms of assembly, homodimer.

Initiation for plasmid R6K DNA replication. This Escherichia coli protein is PI protein (pir).